Here is a 430-residue protein sequence, read N- to C-terminus: N-lysine methyltransferase SMYD2-B (430 aa).

Residues 5 to 239 (EGLERFDSPG…AGEEVFTSYI (235 aa)) enclose the SET domain. Residue 15 to 17 (KGR) coordinates S-adenosyl-L-methionine. Residues Cys-50, Cys-53, Cys-63, Cys-66, Cys-72, Cys-76, His-84, and Cys-88 each coordinate Zn(2+). An MYND-type zinc finger spans residues 50–88 (CDFCFTRKEGLSKCGKCKQAFYCNVDCQKGDWPMHKLEC). Residues His-135, 204–205 (NH), and 256–258 (YFF) contribute to the S-adenosyl-L-methionine site.

This sequence belongs to the class V-like SAM-binding methyltransferase superfamily.

Its subcellular location is the cytoplasm. The protein resides in the cytosol. The protein localises to the nucleus. The catalysed reaction is L-lysyl(4)-[histone H3] + 3 S-adenosyl-L-methionine = N(6),N(6),N(6)-trimethyl-L-lysyl(4)-[histone H3] + 3 S-adenosyl-L-homocysteine + 3 H(+). It catalyses the reaction L-lysyl-[protein] + S-adenosyl-L-methionine = N(6)-methyl-L-lysyl-[protein] + S-adenosyl-L-homocysteine + H(+). Functionally, protein-lysine N-methyltransferase that methylates both histones and non-histone proteins, including p53/TP53 and RB1. Specifically trimethylates histone H3 'Lys-4' (H3K4me3) in vivo. The activity requires interaction with HSP90alpha. Shows even higher methyltransferase activity on p53/TP53. Monomethylates 'Lys-370' of p53/TP53, leading to decreased DNA-binding activity and subsequent transcriptional regulation activity of p53/TP53. Monomethylates RB1 at 'Lys-860'. The chain is N-lysine methyltransferase SMYD2-B (smyd2-b) from Xenopus laevis (African clawed frog).